A 158-amino-acid chain; its full sequence is Small ribosomal subunit protein uS10m (158 aa).

This sequence belongs to the universal ribosomal protein uS10 family.

The protein localises to the mitochondrion. The protein is Small ribosomal subunit protein uS10m (mrps-10) of Caenorhabditis briggsae.